A 459-amino-acid chain; its full sequence is Argininosuccinate lyase (459 aa).

This sequence belongs to the lyase 1 family. Argininosuccinate lyase subfamily.

It localises to the cytoplasm. The catalysed reaction is 2-(N(omega)-L-arginino)succinate = fumarate + L-arginine. It functions in the pathway amino-acid biosynthesis; L-arginine biosynthesis; L-arginine from L-ornithine and carbamoyl phosphate: step 3/3. This chain is Argininosuccinate lyase, found in Lactococcus lactis subsp. lactis (strain IL1403) (Streptococcus lactis).